Consider the following 565-residue polypeptide: Probable protease Gilli_2517 (565 aa).

Its function is as follows. Probably a dedicated protease for substrate gasdermin bGSDM; cleaves the bGSDM precursor, releasing the pore-forming moiety, which integrates into the membrane and triggers cell death. Involved in defense against bacteriophages. Expression of bGSDM and this neighboring protease is not toxic in E.coli. This Gillisia limnaea (strain DSM 15749 / LMG 21470 / R-8282) protein is Probable protease Gilli_2517.